The following is a 149-amino-acid chain: D-aminoacyl-tRNA deacylase (149 aa).

A Gly-cisPro motif, important for rejection of L-amino acids motif is present at residues 137 to 138 (GP).

It belongs to the DTD family. As to quaternary structure, homodimer.

It is found in the cytoplasm. It catalyses the reaction glycyl-tRNA(Ala) + H2O = tRNA(Ala) + glycine + H(+). The enzyme catalyses a D-aminoacyl-tRNA + H2O = a tRNA + a D-alpha-amino acid + H(+). Its function is as follows. An aminoacyl-tRNA editing enzyme that deacylates mischarged D-aminoacyl-tRNAs. Also deacylates mischarged glycyl-tRNA(Ala), protecting cells against glycine mischarging by AlaRS. Acts via tRNA-based rather than protein-based catalysis; rejects L-amino acids rather than detecting D-amino acids in the active site. By recycling D-aminoacyl-tRNA to D-amino acids and free tRNA molecules, this enzyme counteracts the toxicity associated with the formation of D-aminoacyl-tRNA entities in vivo and helps enforce protein L-homochirality. This Clostridium acetobutylicum (strain ATCC 824 / DSM 792 / JCM 1419 / IAM 19013 / LMG 5710 / NBRC 13948 / NRRL B-527 / VKM B-1787 / 2291 / W) protein is D-aminoacyl-tRNA deacylase.